We begin with the raw amino-acid sequence, 268 residues long: Enoyl-[acyl-carrier-protein] reductase [NADH] (268 aa).

Residues 20–21 (SI), 64–65 (DV), and 95–96 (IA) contribute to the NAD(+) site. Y157 is a binding site for substrate. The NAD(+) site is built by K164 and I193.

This sequence belongs to the short-chain dehydrogenases/reductases (SDR) family. FabI subfamily. As to quaternary structure, homodimer. Homotetramer.

It carries out the reaction a 2,3-saturated acyl-[ACP] + NAD(+) = a (2E)-enoyl-[ACP] + NADH + H(+). The enzyme catalyses a 2,3-saturated acyl-CoA + NAD(+) = a (2E)-enoyl-CoA + NADH + H(+). Its pathway is lipid metabolism; mycolic acid biosynthesis. In terms of biological role, enoyl-ACP reductase of the type II fatty acid syntase (FAS-II) system, which is involved in the biosynthesis of mycolic acids, a major component of mycobacterial cell walls. Catalyzes the NADH-dependent reduction of the double bond of 2-trans-enoyl-[acyl-carrier protein], an essential step in the fatty acid elongation cycle of the FAS-II pathway. Shows preference for long-chain fatty acyl thioester substrates, and can also use 2-trans-enoyl-CoAs as alternative substrates. The mycobacterial FAS-II system utilizes the products of the FAS-I system as primers to extend fatty acyl chain lengths up to C56, forming the meromycolate chain that serves as the precursor for final mycolic acids. This is Enoyl-[acyl-carrier-protein] reductase [NADH] from Mycobacterium avium.